The following is a 103-amino-acid chain: NAD(P)H-quinone oxidoreductase subunit 4L (103 aa).

3 consecutive transmembrane segments (helical) span residues 5-25, 32-52, and 66-86; these read LQYC…GLIT, VLMS…GFSN, and IFVI…VLAI.

This sequence belongs to the complex I subunit 4L family. NDH-1 can be composed of about 15 different subunits; different subcomplexes with different compositions have been identified which probably have different functions.

The protein resides in the cellular thylakoid membrane. The enzyme catalyses a plastoquinone + NADH + (n+1) H(+)(in) = a plastoquinol + NAD(+) + n H(+)(out). It catalyses the reaction a plastoquinone + NADPH + (n+1) H(+)(in) = a plastoquinol + NADP(+) + n H(+)(out). Functionally, NDH-1 shuttles electrons from an unknown electron donor, via FMN and iron-sulfur (Fe-S) centers, to quinones in the respiratory and/or the photosynthetic chain. The immediate electron acceptor for the enzyme in this species is believed to be plastoquinone. Couples the redox reaction to proton translocation, and thus conserves the redox energy in a proton gradient. Cyanobacterial NDH-1 also plays a role in inorganic carbon-concentration. The polypeptide is NAD(P)H-quinone oxidoreductase subunit 4L (Synechocystis sp. (strain ATCC 27184 / PCC 6803 / Kazusa)).